The chain runs to 912 residues: DNA ligase 4 (912 aa).

The ATP site is built by E276, T277, K278, L279, R283, E336, K350, F372, E432, K437, K454, and K456. The active-site N6-AMP-lysine intermediate is K278. Residue E336 coordinates Mg(2+). Position 432 (E432) interacts with Mg(2+). Positions L615 to Y625 are required for catalytic activity. 2 BRCT domains span residues K659–M748 and C809–I912.

It belongs to the ATP-dependent DNA ligase family. Interacts with XRCC4; the LIG4-XRCC4 subcomplex has a 1:2 stoichiometry. Component of the core long-range non-homologous end joining (NHEJ) complex (also named DNA-PK complex) composed of PRKDC, LIG4, XRCC4, XRCC6/Ku70, XRCC5/Ku86 and NHEJ1/XLF. Additional component of the NHEJ complex includes PAXX. Following autophosphorylation, PRKDC dissociates from DNA, leading to formation of the short-range NHEJ complex, composed of LIG4, XRCC4, XRCC6/Ku70, XRCC5/Ku86 and NHEJ1/XLF. The cofactor is Mg(2+).

The protein localises to the nucleus. The enzyme catalyses ATP + (deoxyribonucleotide)n-3'-hydroxyl + 5'-phospho-(deoxyribonucleotide)m = (deoxyribonucleotide)n+m + AMP + diphosphate.. Its function is as follows. DNA ligase involved in DNA non-homologous end joining (NHEJ); required for double-strand break (DSB) repair and V(D)J recombination. Catalyzes the NHEJ ligation step of the broken DNA during DSB repair by resealing the DNA breaks after the gap filling is completed. Joins single-strand breaks in a double-stranded polydeoxynucleotide in an ATP-dependent reaction. LIG4 is mechanistically flexible: it can ligate nicks as well as compatible DNA overhangs alone, while in the presence of XRCC4, it can ligate ends with 2-nucleotides (nt) microhomology and 1-nt gaps. Forms a subcomplex with XRCC4; the LIG4-XRCC4 subcomplex is responsible for the NHEJ ligation step and XRCC4 enhances the joining activity of LIG4. The protein is DNA ligase 4 of Gallus gallus (Chicken).